Here is a 95-residue protein sequence, read N- to C-terminus: Co-chaperonin GroES (95 aa).

The tract at residues K20–E45 is disordered.

This sequence belongs to the GroES chaperonin family. Heptamer of 7 subunits arranged in a ring. Interacts with the chaperonin GroEL.

It localises to the cytoplasm. In terms of biological role, together with the chaperonin GroEL, plays an essential role in assisting protein folding. The GroEL-GroES system forms a nano-cage that allows encapsulation of the non-native substrate proteins and provides a physical environment optimized to promote and accelerate protein folding. GroES binds to the apical surface of the GroEL ring, thereby capping the opening of the GroEL channel. The polypeptide is Co-chaperonin GroES (Paracoccus denitrificans).